A 185-amino-acid chain; its full sequence is MDNFEQVLNALQQGEVIAYPTEGVFGVGCDPDNPDAIQKLLDLKQRPVEKGLILIAASYEQLLPYIDESQLTPEQLATVHATWPGPYTWIMPASDKVSNWVSGQFDSIAVRVTDHPLVQKMCNAFGKPLTSTSANLSGLPPCMTTEEVEQQLGDKLVAILRGETSGRDKPSEIRDAKTSQILRQG.

The YrdC-like domain occupies 1 to 185 (MDNFEQVLNA…AKTSQILRQG (185 aa)). The interval 163-185 (ETSGRDKPSEIRDAKTSQILRQG) is disordered. A compositionally biased stretch (basic and acidic residues) spans 164 to 177 (TSGRDKPSEIRDAK).

The protein belongs to the SUA5 family. TsaC subfamily.

The protein resides in the cytoplasm. It catalyses the reaction L-threonine + hydrogencarbonate + ATP = L-threonylcarbamoyladenylate + diphosphate + H2O. Its function is as follows. Required for the formation of a threonylcarbamoyl group on adenosine at position 37 (t(6)A37) in tRNAs that read codons beginning with adenine. Catalyzes the conversion of L-threonine, HCO(3)(-)/CO(2) and ATP to give threonylcarbamoyl-AMP (TC-AMP) as the acyladenylate intermediate, with the release of diphosphate. This chain is Threonylcarbamoyl-AMP synthase, found in Vibrio parahaemolyticus serotype O3:K6 (strain RIMD 2210633).